The following is a 663-amino-acid chain: MAU2 chromatid cohesion factor homolog (663 aa).

TPR repeat units follow at residues 455–488 and 495–528; these read GGFYYVQGLHAFHKNSFHEAKRFLRETLKMANAE and SCSLVLLSHVFLSIGNSKESMNMVTPAMQLASKI.

Belongs to the SCC4/mau-2 family. In terms of assembly, interacts with Nipped-B to form the cohesin loading complex.

The protein localises to the nucleus. The protein resides in the nucleoplasm. Its function is as follows. Required for association of the cohesin complex with chromatin during interphase. Plays a role in sister chromatid cohesion and normal progression through prometaphase. In Drosophila willistoni (Fruit fly), this protein is MAU2 chromatid cohesion factor homolog.